The primary structure comprises 173 residues: Crossover junction endodeoxyribonuclease RuvC (173 aa).

Active-site residues include Asp8, Glu67, and Asp139. Mg(2+) contacts are provided by Asp8, Glu67, and Asp139.

This sequence belongs to the RuvC family. In terms of assembly, homodimer which binds Holliday junction (HJ) DNA. The HJ becomes 2-fold symmetrical on binding to RuvC with unstacked arms; it has a different conformation from HJ DNA in complex with RuvA. In the full resolvosome a probable DNA-RuvA(4)-RuvB(12)-RuvC(2) complex forms which resolves the HJ. Mg(2+) serves as cofactor.

It localises to the cytoplasm. It catalyses the reaction Endonucleolytic cleavage at a junction such as a reciprocal single-stranded crossover between two homologous DNA duplexes (Holliday junction).. Its function is as follows. The RuvA-RuvB-RuvC complex processes Holliday junction (HJ) DNA during genetic recombination and DNA repair. Endonuclease that resolves HJ intermediates. Cleaves cruciform DNA by making single-stranded nicks across the HJ at symmetrical positions within the homologous arms, yielding a 5'-phosphate and a 3'-hydroxyl group; requires a central core of homology in the junction. The consensus cleavage sequence is 5'-(A/T)TT(C/G)-3'. Cleavage occurs on the 3'-side of the TT dinucleotide at the point of strand exchange. HJ branch migration catalyzed by RuvA-RuvB allows RuvC to scan DNA until it finds its consensus sequence, where it cleaves and resolves the cruciform DNA. This chain is Crossover junction endodeoxyribonuclease RuvC, found in Baumannia cicadellinicola subsp. Homalodisca coagulata.